The chain runs to 418 residues: Tyrosine--tRNA ligase 1 (418 aa).

Tyr-34 provides a ligand contact to L-tyrosine. The 'HIGH' region signature appears at 39-48 (PTADSLHIGH). 2 residues coordinate L-tyrosine: Tyr-169 and Gln-173. The 'KMSKS' region signature appears at 230–234 (KFGKT). Position 233 (Lys-233) interacts with ATP. Residues 352–418 (TVLIDLLVES…GKKKYFLIRY (67 aa)) form the S4 RNA-binding domain.

The protein belongs to the class-I aminoacyl-tRNA synthetase family. TyrS type 1 subfamily. As to quaternary structure, homodimer.

It is found in the cytoplasm. It carries out the reaction tRNA(Tyr) + L-tyrosine + ATP = L-tyrosyl-tRNA(Tyr) + AMP + diphosphate + H(+). Its function is as follows. Catalyzes the attachment of tyrosine to tRNA(Tyr) in a two-step reaction: tyrosine is first activated by ATP to form Tyr-AMP and then transferred to the acceptor end of tRNA(Tyr). The polypeptide is Tyrosine--tRNA ligase 1 (Bacillus anthracis).